Reading from the N-terminus, the 155-residue chain is Endoribonuclease YbeY (155 aa).

Zn(2+) contacts are provided by His-117, His-121, and His-127.

Belongs to the endoribonuclease YbeY family. The cofactor is Zn(2+).

It localises to the cytoplasm. In terms of biological role, single strand-specific metallo-endoribonuclease involved in late-stage 70S ribosome quality control and in maturation of the 3' terminus of the 16S rRNA. This Treponema denticola (strain ATCC 35405 / DSM 14222 / CIP 103919 / JCM 8153 / KCTC 15104) protein is Endoribonuclease YbeY.